A 302-amino-acid polypeptide reads, in one-letter code: N-acetyl-D-glucosamine kinase (302 aa).

ATP-binding positions include 4–11 (GFDIGGTK) and 133–139 (GGGGLVL). Zn(2+) is bound by residues His156, Cys176, Cys178, and Cys183.

This sequence belongs to the ROK (NagC/XylR) family. NagK subfamily.

It carries out the reaction N-acetyl-D-glucosamine + ATP = N-acetyl-D-glucosamine 6-phosphate + ADP + H(+). The protein operates within cell wall biogenesis; peptidoglycan recycling. Its function is as follows. Catalyzes the phosphorylation of N-acetyl-D-glucosamine (GlcNAc) derived from cell-wall degradation, yielding GlcNAc-6-P. This chain is N-acetyl-D-glucosamine kinase, found in Salmonella typhi.